Here is a 241-residue protein sequence, read N- to C-terminus: Ribonuclease PH (241 aa).

Phosphate is bound by residues Arg89 and 127-129; that span reads GTR.

Belongs to the RNase PH family. As to quaternary structure, homohexameric ring arranged as a trimer of dimers.

It carries out the reaction tRNA(n+1) + phosphate = tRNA(n) + a ribonucleoside 5'-diphosphate. Phosphorolytic 3'-5' exoribonuclease that plays an important role in tRNA 3'-end maturation. Removes nucleotide residues following the 3'-CCA terminus of tRNAs; can also add nucleotides to the ends of RNA molecules by using nucleoside diphosphates as substrates, but this may not be physiologically important. Probably plays a role in initiation of 16S rRNA degradation (leading to ribosome degradation) during starvation. The sequence is that of Ribonuclease PH from Xylella fastidiosa (strain M23).